A 590-amino-acid polypeptide reads, in one-letter code: EGF-like and EMI domain-containing protein 1 (590 aa).

A signal peptide spans 1–23 (MTSPLCFWCFCVWAAANWPPGSA). Residues 44-104 (LSRPCAQAFI…RCCPGWIQWD (61 aa)) enclose the EMI domain. Positions 105-145 (DEPGCFSSLSSLGTHFSGRECSYQDTRQCLCSQGFHGPHCQ) constitute an EGF-like 1 domain. Disulfide bonds link cysteine 109-cysteine 125, cysteine 135-cysteine 144, cysteine 168-cysteine 179, cysteine 175-cysteine 188, cysteine 190-cysteine 203, cysteine 209-cysteine 219, cysteine 215-cysteine 228, cysteine 230-cysteine 243, cysteine 249-cysteine 260, cysteine 256-cysteine 269, and cysteine 271-cysteine 284. In terms of domain architecture, EGF-like 2; calcium-binding spans 164–204 (NVDECAVVNGGCQQRCINTLGTFHCECDTGYRRHADERTCI). The region spanning 205-244 (KTDPCAGANGCAHLCQTENGMARCACHAGYQLSEDKKACE) is the EGF-like 3 domain. Positions 245–285 (DINECAGELAPCAHHCVNSKGSFTCTCHPGFELGADRKHCY) constitute an EGF-like 4; calcium-binding domain. A disordered region spans residues 393 to 424 (RLAQNPPQPFPYLDPSLTASYEDEDNDDADSE). Over residues 413–424 (YEDEDNDDADSE) the composition is skewed to acidic residues. In terms of domain architecture, EGF-like 5 spans 445 to 481 (FGLDCSLSCEDCMNGGRCQEGKSGCLCPAEWTGLICN). 3 cysteine pairs are disulfide-bonded: cysteine 449–cysteine 462, cysteine 456–cysteine 469, and cysteine 471–cysteine 480.

In Mus musculus (Mouse), this protein is EGF-like and EMI domain-containing protein 1 (Egfem1).